The chain runs to 366 residues: Isocitrate dehydrogenase [NAD] subunit alpha, mitochondrial (366 aa).

A mitochondrion-targeting transit peptide spans 1-27; sequence MAGSAWVSKVSRLLGAFHNTKQVTRGF. Lys77 bears the N6-succinyllysine mark. Phosphothreonine is present on Thr101. The substrate site is built by Arg115, Arg125, and Arg146. The residue at position 223 (Lys223) is an N6-acetyllysine. The Mg(2+) site is built by Asp233, Asp257, and Asp261. Lys343 carries the N6-acetyllysine; alternate modification. Lys343 bears the N6-succinyllysine; alternate mark. An N6-succinyllysine modification is found at Lys350.

Belongs to the isocitrate and isopropylmalate dehydrogenases family. In terms of assembly, heterooligomer of subunits alpha (IDH3A), beta (IDH3B), and gamma (IDH3G) in the apparent ratio of 2:1:1. The heterodimer containing one IDH3A and one IDH3B subunit and the heterodimer containing one IDH3A and one IDH3G subunit assemble into a heterotetramer (which contains two subunits of IDH3A, one of IDH3B and one of IDH3G) and further into the heterooctamer. It depends on Mg(2+) as a cofactor. Mn(2+) is required as a cofactor. Expressed in brown adipose tissue (BAT).

Its subcellular location is the mitochondrion. It catalyses the reaction D-threo-isocitrate + NAD(+) = 2-oxoglutarate + CO2 + NADH. With respect to regulation, the heterotetramer and the heterodimer composed of IDH3A and IDH3G subunits can be allosterically activated by citrate (CIT) or/and ADP, and the two activators can act independently or synergistically. The heterodimer composed of IDH3A and IDH3B subunits cannot be allosterically regulated and the allosteric regulation of the heterotetramer is through the IDH3G subunit and not the IDH3B subunit. The IDH3G subunit contains the allosteric site which consists of a CIT-binding site and an ADP-binding site, and the binding of CIT and ADP causes conformational changes at the allosteric site which are transmitted to the active site in the catalytic subunit (IDH3A) through a cascade of conformational changes at the heterodimer interface, leading to stabilization of the isocitrate-binding at the active site and thus activation of the enzyme. ATP can activate the heterotetramer and the heterodimer composed of IDH3A and IDH3G subunits at low concentrations but inhibits their activities at high concentrations, whereas ATP exhibits only inhibitory effect on the heterodimer composed of IDH3A and IDH3B subunits. Catalytic subunit of the enzyme which catalyzes the decarboxylation of isocitrate (ICT) into alpha-ketoglutarate. The heterodimer composed of the alpha (IDH3A) and beta (IDH3B) subunits and the heterodimer composed of the alpha (IDH3A) and gamma (IDH3G) subunits, have considerable basal activity but the full activity of the heterotetramer (containing two subunits of IDH3A, one of IDH3B and one of IDH3G) requires the assembly and cooperative function of both heterodimers. The protein is Isocitrate dehydrogenase [NAD] subunit alpha, mitochondrial of Rattus norvegicus (Rat).